A 415-amino-acid chain; its full sequence is Fructose-like permease IIC component (415 aa).

The Cytoplasmic portion of the chain corresponds to 1–46; that stretch reads MAIKKRSATVVPGASGAAAAVKNLQASKSSFWGELPQHVMSGISRM. Residues 35–415 enclose the PTS EIIC type-2 domain; that stretch reads LPQHVMSGIS…RKGKLLIDSL (381 aa). Residues 47–67 traverse the membrane as a helical segment; the sequence is VPTLIMGGVILAFSQLIAYSW. Topologically, residues 68-101 are periplasmic; the sequence is LKIPAEIGIMDALNSGKFSGFDLSLLKFAWLSQS. A helical transmembrane segment spans residues 102–122; sequence FGGVLFGFAIPMFAAFVANSI. Residues 123-126 lie on the Cytoplasmic side of the membrane; it reads GGKL. Residues 127–147 form a helical membrane-spanning segment; sequence AFPAGFIGGLMSTQPTQLLNF. Residues 148–157 lie on the Periplasmic side of the membrane; it reads DPSTMQWATS. The chain crosses the membrane as a helical span at residues 158-178; the sequence is SPVPSTFIGALIISIVAGYLV. At 179–197 the chain is on the cytoplasmic side; the sequence is KWMNQKIQLPDFLLAFKTT. Residues 198–218 traverse the membrane as a helical segment; sequence FLLPILSAIFVMLAMYYVITP. Residues 219–237 are Periplasmic-facing; the sequence is FGGWINGGIRTVLTAAGEK. The helical transmembrane segment at 238–258 threads the bilayer; the sequence is GALMYAMGIAAATAIDLGGPI. The Cytoplasmic segment spans residues 259–276; the sequence is NKAAGFVAFSFTTDHVLP. Residues 277-297 form a helical membrane-spanning segment; the sequence is VTARSIAIVIPPIGLGLATII. At 298–318 the chain is on the periplasmic side; that stretch reads DRRLTGKRLFNAQLYPQGKTA. A helical membrane pass occupies residues 319-339; the sequence is MFLAFMGISEGAIPFALESPI. The Cytoplasmic portion of the chain corresponds to 340–341; sequence TA. A helical transmembrane segment spans residues 342–362; the sequence is IPSYMVGAIVGSTAAVWLGAV. Topologically, residues 363-378 are periplasmic; sequence QWFPESAIWAWPLVTN. A helical transmembrane segment spans residues 379–399; the sequence is LGVYMAGIALGAIITALMVVF. The Cytoplasmic segment spans residues 400–415; it reads LRLMMFRKGKLLIDSL.

It localises to the cell inner membrane. In terms of biological role, the phosphoenolpyruvate-dependent sugar phosphotransferase system (PTS), a major carbohydrate active -transport system, catalyzes the phosphorylation of incoming sugar substrates concomitant with their translocation across the cell membrane. This is Fructose-like permease IIC component (fryC) from Shigella flexneri.